Reading from the N-terminus, the 528-residue chain is Probable rhamnogalacturonate lyase A (528 aa).

A signal peptide spans 1-20 (MLSRTILFSTSFLWVRVANA). Cystine bridges form between C50–C93 and C184–C193.

The protein belongs to the polysaccharide lyase 4 family.

The protein resides in the secreted. The catalysed reaction is Endotype eliminative cleavage of L-alpha-rhamnopyranosyl-(1-&gt;4)-alpha-D-galactopyranosyluronic acid bonds of rhamnogalacturonan I domains in ramified hairy regions of pectin leaving L-rhamnopyranose at the reducing end and 4-deoxy-4,5-unsaturated D-galactopyranosyluronic acid at the non-reducing end.. In terms of biological role, pectinolytic enzymes consist of four classes of enzymes: pectin lyase, polygalacturonase, pectin methylesterase and rhamnogalacturonase. Degrades the rhamnogalacturonan I (RG-I) backbone of pectin. The protein is Probable rhamnogalacturonate lyase A (rglA) of Aspergillus flavus (strain ATCC 200026 / FGSC A1120 / IAM 13836 / NRRL 3357 / JCM 12722 / SRRC 167).